The primary structure comprises 265 residues: Probable cyclic nucleotide phosphodiesterase SynWH7803_1390 (265 aa).

Residues Asp-9, His-11, Asp-49, Asn-86, His-157, His-196, and His-198 each contribute to the Fe cation site. AMP-binding positions include His-11, Asp-49, and 86 to 87 (NH). His-198 is an AMP binding site.

The protein belongs to the cyclic nucleotide phosphodiesterase class-III family. Fe(2+) serves as cofactor.

The sequence is that of Probable cyclic nucleotide phosphodiesterase SynWH7803_1390 from Synechococcus sp. (strain WH7803).